Consider the following 75-residue polypeptide: MDLVALKFIAIGLSVLGILGAGLGVANIFSTMLSGLARNPESEGKMKIYVYVGAGMVEFTGLLAFVLAMLLMFVA.

Helical transmembrane passes span phenylalanine 8–isoleucine 28 and alanine 54–valine 74.

The protein belongs to the ATPase C chain family. As to quaternary structure, F-type ATPases have 2 components, F(1) - the catalytic core - and F(0) - the membrane proton channel. F(1) has five subunits: alpha(3), beta(3), gamma(1), delta(1), epsilon(1). F(0) has three main subunits: a(1), b(2) and c(10-14). The alpha and beta chains form an alternating ring which encloses part of the gamma chain. F(1) is attached to F(0) by a central stalk formed by the gamma and epsilon chains, while a peripheral stalk is formed by the delta and b chains.

The protein resides in the cell membrane. In terms of biological role, f(1)F(0) ATP synthase produces ATP from ADP in the presence of a proton or sodium gradient. F-type ATPases consist of two structural domains, F(1) containing the extramembraneous catalytic core and F(0) containing the membrane proton channel, linked together by a central stalk and a peripheral stalk. During catalysis, ATP synthesis in the catalytic domain of F(1) is coupled via a rotary mechanism of the central stalk subunits to proton translocation. Functionally, key component of the F(0) channel; it plays a direct role in translocation across the membrane. A homomeric c-ring of between 10-14 subunits forms the central stalk rotor element with the F(1) delta and epsilon subunits. This Wolbachia sp. subsp. Brugia malayi (strain TRS) protein is ATP synthase subunit c.